Here is a 506-residue protein sequence, read N- to C-terminus: Glucosidase 2 subunit beta (506 aa).

Positions 1-23 (MKFSQWYTLTAPLLISSLYTVNA) are cleaved as a signal peptide. Cysteines 86 and 108 form a disulfide. 2 coiled-coil regions span residues 172–243 (SLVA…LYET) and 338–374 (ESYR…LEYH). Positions 279-474 (ESCNNHLSML…KMKSPAACSP (196 aa)) constitute an MRH domain. Intrachain disulfides connect Cys-431-Cys-460 and Cys-445-Cys-472. Residues 503–506 (VDEL) carry the ER retrieval sequence motif.

Heterodimer of a catalytic subunit alpha (gls2) and a subunit beta (gtb1).

The protein localises to the endoplasmic reticulum. Subunit of glucosidase 2, which cleaves sequentially the 2 innermost alpha-1,3-linked glucose residues from the Glc(2)Man(9)GlcNAc(2) oligosaccharide precursor of immature glycoproteins in the endoplasmic reticulum (ER). Specifically required for the cleavage of the final glucose. The subunit beta retains the catalytic subunit alpha in the ER. This is Glucosidase 2 subunit beta (gtb1) from Schizosaccharomyces pombe (strain 972 / ATCC 24843) (Fission yeast).